We begin with the raw amino-acid sequence, 437 residues long: Enolase (437 aa).

Gln162 serves as a coordination point for (2R)-2-phosphoglycerate. Residue Glu204 is the Proton donor of the active site. Residues Asp251, Glu297, and Asp324 each contribute to the Mg(2+) site. Positions 349, 378, 379, and 400 each coordinate (2R)-2-phosphoglycerate. The active-site Proton acceptor is Lys349.

This sequence belongs to the enolase family. Mg(2+) serves as cofactor.

It is found in the cytoplasm. The protein resides in the secreted. Its subcellular location is the cell surface. It catalyses the reaction (2R)-2-phosphoglycerate = phosphoenolpyruvate + H2O. It functions in the pathway carbohydrate degradation; glycolysis; pyruvate from D-glyceraldehyde 3-phosphate: step 4/5. Functionally, catalyzes the reversible conversion of 2-phosphoglycerate (2-PG) into phosphoenolpyruvate (PEP). It is essential for the degradation of carbohydrates via glycolysis. The sequence is that of Enolase from Chlorobaculum parvum (strain DSM 263 / NCIMB 8327) (Chlorobium vibrioforme subsp. thiosulfatophilum).